The sequence spans 317 residues: 4-hydroxy-3-methylbut-2-enyl diphosphate reductase (317 aa).

C12 contributes to the [4Fe-4S] cluster binding site. Residues H41 and H74 each coordinate (2E)-4-hydroxy-3-methylbut-2-enyl diphosphate. Residues H41 and H74 each contribute to the dimethylallyl diphosphate site. H41 and H74 together coordinate isopentenyl diphosphate. C97 serves as a coordination point for [4Fe-4S] cluster. Residue H125 coordinates (2E)-4-hydroxy-3-methylbut-2-enyl diphosphate. H125 contacts dimethylallyl diphosphate. Residue H125 participates in isopentenyl diphosphate binding. E127 functions as the Proton donor in the catalytic mechanism. Residue T168 participates in (2E)-4-hydroxy-3-methylbut-2-enyl diphosphate binding. Residue C198 participates in [4Fe-4S] cluster binding. The (2E)-4-hydroxy-3-methylbut-2-enyl diphosphate site is built by S226, S227, N228, and S270. Dimethylallyl diphosphate contacts are provided by S226, S227, N228, and S270. The isopentenyl diphosphate site is built by S226, S227, N228, and S270.

It belongs to the IspH family. As to quaternary structure, homodimer. [4Fe-4S] cluster is required as a cofactor.

It catalyses the reaction isopentenyl diphosphate + 2 oxidized [2Fe-2S]-[ferredoxin] + H2O = (2E)-4-hydroxy-3-methylbut-2-enyl diphosphate + 2 reduced [2Fe-2S]-[ferredoxin] + 2 H(+). The enzyme catalyses dimethylallyl diphosphate + 2 oxidized [2Fe-2S]-[ferredoxin] + H2O = (2E)-4-hydroxy-3-methylbut-2-enyl diphosphate + 2 reduced [2Fe-2S]-[ferredoxin] + 2 H(+). The protein operates within isoprenoid biosynthesis; dimethylallyl diphosphate biosynthesis; dimethylallyl diphosphate from (2E)-4-hydroxy-3-methylbutenyl diphosphate: step 1/1. It participates in isoprenoid biosynthesis; isopentenyl diphosphate biosynthesis via DXP pathway; isopentenyl diphosphate from 1-deoxy-D-xylulose 5-phosphate: step 6/6. Catalyzes the conversion of 1-hydroxy-2-methyl-2-(E)-butenyl 4-diphosphate (HMBPP) into a mixture of isopentenyl diphosphate (IPP) and dimethylallyl diphosphate (DMAPP). Acts in the terminal step of the DOXP/MEP pathway for isoprenoid precursor biosynthesis. This is 4-hydroxy-3-methylbut-2-enyl diphosphate reductase from Yersinia pestis bv. Antiqua (strain Antiqua).